The sequence spans 550 residues: Glucose-6-phosphate isomerase (550 aa).

Glutamate 356 serves as the catalytic Proton donor. Catalysis depends on residues histidine 387 and lysine 515.

This sequence belongs to the GPI family.

The protein resides in the cytoplasm. The catalysed reaction is alpha-D-glucose 6-phosphate = beta-D-fructose 6-phosphate. The protein operates within carbohydrate biosynthesis; gluconeogenesis. Its pathway is carbohydrate degradation; glycolysis; D-glyceraldehyde 3-phosphate and glycerone phosphate from D-glucose: step 2/4. Its function is as follows. Catalyzes the reversible isomerization of glucose-6-phosphate to fructose-6-phosphate. The chain is Glucose-6-phosphate isomerase from Photobacterium profundum (strain SS9).